Here is a 400-residue protein sequence, read N- to C-terminus: ATP-dependent RNA helicase fal-1 (400 aa).

The Q motif signature appears at 26–54 (PTFESMSLKESLLRGIYAYGYESPSAVQS). Positions 57–227 (IVQICKGRDT…TKFMTDPVRI (171 aa)) constitute a Helicase ATP-binding domain. 70–77 (AQSGTGKT) provides a ligand contact to ATP. Residues 175–178 (DEAD) carry the DEAD box motif. The Helicase C-terminal domain maps to 238–399 (GLKQYFIAVE…EMPMNVADLI (162 aa)).

It belongs to the DEAD box helicase family. DDX48/FAL1 subfamily.

Its subcellular location is the nucleus. The protein resides in the nucleolus. The catalysed reaction is ATP + H2O = ADP + phosphate + H(+). In terms of biological role, ATP-dependent RNA helicase involved in 40S ribosomal subunit biogenesis. Required for the processing and cleavage of 35S pre-rRNA at sites A0, A1, and A2, leading to mature 18S rRNA. The polypeptide is ATP-dependent RNA helicase fal-1 (fal-1) (Neurospora crassa (strain ATCC 24698 / 74-OR23-1A / CBS 708.71 / DSM 1257 / FGSC 987)).